The following is a 135-amino-acid chain: Large ribosomal subunit protein uL16c (135 aa).

Belongs to the universal ribosomal protein uL16 family. In terms of assembly, part of the 50S ribosomal subunit.

It localises to the plastid. It is found in the chloroplast. This chain is Large ribosomal subunit protein uL16c, found in Eucalyptus globulus subsp. globulus (Tasmanian blue gum).